We begin with the raw amino-acid sequence, 187 residues long: Peptidoglycan-recognition protein 3 (187 aa).

The signal sequence occupies residues Met-1–Ala-19. Disulfide bonds link Cys-21-Cys-144 and Cys-58-Cys-64. The N-acetylmuramoyl-L-alanine amidase domain maps to Lys-43–Gly-170. Asn-51 carries an N-linked (GlcNAc...) asparagine glycan.

Belongs to the N-acetylmuramoyl-L-alanine amidase 2 family.

It localises to the secreted. Functionally, peptidoglycan-recognition protein probably involved in innate immunity by binding to peptidoglycans (PGN) of bacteria and activating the prophenoloxidase (proPO) cascade immune response. Binds to 1,3-beta-D-glucan and PGN. The chain is Peptidoglycan-recognition protein 3 (PGRP-3) from Holotrichia diomphalia (Korean black chafer).